We begin with the raw amino-acid sequence, 1623 residues long: ATP-binding cassette sub-family A member 9 (1623 aa).

Residues 31 to 51 form a helical membrane-spanning segment; that stretch reads LLEWLFSLLLILFVYQLSSNL. Residue Asn-120 is glycosylated (N-linked (GlcNAc...) asparagine). 6 helical membrane-spanning segments follow: residues 225-245, 265-285, 295-315, 329-349, 354-374, and 398-418; these read FFIF…SVNI, AFWL…AVLM, VVLT…LSLI, FLTG…GFTA, LPAF…TTGM, and LIMA…VLAL. The 236-residue stretch at 481–716 folds into the ABC transporter 1 domain; the sequence is IRIKNLKKEY…WGIGYHLSLH (236 aa). 517–524 lines the ATP pocket; it reads GHSGAGKT. A run of 7 helical transmembrane segments spans residues 863–883, 1025–1045, 1071–1091, 1107–1127, 1135–1155, 1163–1183, and 1199–1219; these read LMTV…EHLV, AFFW…GSIS, LVDI…DSVF, IPCS…ISFI, SGIW…ATDI, LLIC…LIFS, and QLVF…FFIL. One can recognise an ABC transporter 2 domain in the interval 1287 to 1520; it reads LRKEYIGRTK…FGKDYLLEMK (234 aa). 1325 to 1332 is a binding site for ATP; the sequence is GHNGAGKS.

This sequence belongs to the ABC transporter superfamily. ABCA family. As to expression, highly expressed in heart and to lower extent in kidney, brain and spleen. Weakly expressed in developing and adult brains. Weakly expressed in the cerebellar granular layer at P14 and P21.

It is found in the membrane. In terms of biological role, transporter that may play a role in monocyte differentiation and lipid transport and homeostasis. The sequence is that of ATP-binding cassette sub-family A member 9 (Abca9) from Mus musculus (Mouse).